Reading from the N-terminus, the 219-residue chain is Cytidylate kinase (219 aa).

Glycine 21–threonine 29 is an ATP binding site.

The protein belongs to the cytidylate kinase family. Type 1 subfamily.

The protein localises to the cytoplasm. It carries out the reaction CMP + ATP = CDP + ADP. It catalyses the reaction dCMP + ATP = dCDP + ADP. The chain is Cytidylate kinase from Rickettsia felis (strain ATCC VR-1525 / URRWXCal2) (Rickettsia azadi).